The primary structure comprises 752 residues: Polyribonucleotide nucleotidyltransferase (752 aa).

The Mg(2+) site is built by D529 and D535. The region spanning 595-654 (PRVTTIKVPVDKIGEVIGPKGKVINAITEETGAQISIEDDGTVFVGATDGPSAQAAIDKI) is the KH domain. One can recognise an S1 motif domain in the interval 666–735 (GERFLGTVVK…KRGKISLILV (70 aa)).

It belongs to the polyribonucleotide nucleotidyltransferase family. Mg(2+) is required as a cofactor.

It localises to the cytoplasm. It carries out the reaction RNA(n+1) + phosphate = RNA(n) + a ribonucleoside 5'-diphosphate. Involved in mRNA degradation. Catalyzes the phosphorolysis of single-stranded polyribonucleotides processively in the 3'- to 5'-direction. The polypeptide is Polyribonucleotide nucleotidyltransferase (Mycobacterium tuberculosis (strain ATCC 25177 / H37Ra)).